The sequence spans 284 residues: Serine protease 57 (284 aa).

Positions 1–35 (MPSSTAMVPGTRGGWHCLVLTTAAALTQLMWLPGC) are cleaved as a signal peptide. The 230-residue stretch at 40 to 269 (IVGGHEVTPH…FVTWIWDVVR (230 aa)) folds into the Peptidase S1 domain. Cysteine 65 and cysteine 81 form a disulfide bridge. Active-site charge relay system residues include histidine 80 and aspartate 128. N-linked (GlcNAc...) asparagine glycosylation is present at asparagine 135. 3 disulfides stabilise this stretch: cysteine 163-cysteine 230, cysteine 194-cysteine 208, and cysteine 220-cysteine 245. Serine 224 serves as the catalytic Charge relay system.

Belongs to the peptidase S1 family. Post-translationally, after cleavage of the signal peptide, the N-terminus is probably further processed by CTSC. Processing by CTSC is probably required for accumulation in cytoplasmic granules; in the absence of CTSC the protein does not accumulate. In terms of processing, N-glycosylated.

It localises to the cytoplasmic granule lumen. It is found in the secreted. Functionally, serine protease that cleaves preferentially after Arg residues. Can also cleave after citrulline (deimidated arginine) and methylarginine residues. In Mus musculus (Mouse), this protein is Serine protease 57 (Prss57).